The sequence spans 142 residues: Ribosome-binding factor A (142 aa).

Residues Thr-120 to Thr-142 are disordered. Polar residues predominate over residues Glu-123–Thr-142.

The protein belongs to the RbfA family. As to quaternary structure, monomer. Binds 30S ribosomal subunits, but not 50S ribosomal subunits or 70S ribosomes.

It is found in the cytoplasm. One of several proteins that assist in the late maturation steps of the functional core of the 30S ribosomal subunit. Associates with free 30S ribosomal subunits (but not with 30S subunits that are part of 70S ribosomes or polysomes). Required for efficient processing of 16S rRNA. May interact with the 5'-terminal helix region of 16S rRNA. In Prochlorococcus marinus (strain MIT 9313), this protein is Ribosome-binding factor A.